Consider the following 349-residue polypeptide: Anthranilate phosphoribosyltransferase (349 aa).

5-phospho-alpha-D-ribose 1-diphosphate-binding positions include G82, 85–86, 92–95, 110–118, and S122; these read GD, NVSS, and KHGNRAVSG. G82 lines the anthranilate pocket. Mg(2+) is bound at residue S94. Position 113 (N113) interacts with anthranilate. R168 is a binding site for anthranilate. The Mg(2+) site is built by D227 and E228.

This sequence belongs to the anthranilate phosphoribosyltransferase family. As to quaternary structure, homodimer. Mg(2+) serves as cofactor.

The catalysed reaction is N-(5-phospho-beta-D-ribosyl)anthranilate + diphosphate = 5-phospho-alpha-D-ribose 1-diphosphate + anthranilate. It participates in amino-acid biosynthesis; L-tryptophan biosynthesis; L-tryptophan from chorismate: step 2/5. Its function is as follows. Catalyzes the transfer of the phosphoribosyl group of 5-phosphorylribose-1-pyrophosphate (PRPP) to anthranilate to yield N-(5'-phosphoribosyl)-anthranilate (PRA). The sequence is that of Anthranilate phosphoribosyltransferase from Pseudomonas paraeruginosa (strain DSM 24068 / PA7) (Pseudomonas aeruginosa (strain PA7)).